A 527-amino-acid chain; its full sequence is Probable serine/threonine-protein kinase DDB_G0271538 (527 aa).

Over residues 1-10 (MNINFSKDDI) the composition is skewed to basic and acidic residues. The interval 1–24 (MNINFSKDDITGLPKSTKEEDEND) is disordered. In terms of domain architecture, Protein kinase spans 33-294 (LFMDVEIGRG…KIVVEGLKVL (262 aa)). Residues 39–47 (IGRGSFGQV) and Lys-60 each bind ATP. Asp-156 serves as the catalytic Proton acceptor. Disordered regions lie at residues 304-375 (VKGK…ISGS), 422-452 (FTPP…DDVP), and 485-527 (TALD…KKKL). The segment covering 313–324 (DPDEDSFIDPND) has biased composition (acidic residues). The segment covering 325-359 (DSNNNNNSENNNNNNDNSNENNENNNENNNNSNEN) has biased composition (low complexity). Positions 440 to 452 (VDEDEDEDEDDVP) are enriched in acidic residues. Residues 512 to 527 (PKKKPNNKNKKKKKKL) are compositionally biased toward basic residues.

This sequence belongs to the protein kinase superfamily. TKL Ser/Thr protein kinase family.

It carries out the reaction L-seryl-[protein] + ATP = O-phospho-L-seryl-[protein] + ADP + H(+). The catalysed reaction is L-threonyl-[protein] + ATP = O-phospho-L-threonyl-[protein] + ADP + H(+). This chain is Probable serine/threonine-protein kinase DDB_G0271538, found in Dictyostelium discoideum (Social amoeba).